The primary structure comprises 1031 residues: Formin-binding protein 4 (1031 aa).

Disordered stretches follow at residues 1–102 (MMGK…TTRP), 116–143 (AYAD…NQAT), and 166–205 (APVV…QTPG). Ser-19 is modified (phosphoserine). Composition is skewed to low complexity over residues 41 to 73 (DSTA…APED) and 83 to 92 (VVEVPNVVQN). 3 positions are modified to phosphoserine: Ser-120, Ser-125, and Ser-128. The segment covering 134–143 (SKEANGNQAT) has biased composition (polar residues). Thr-176 carries the post-translational modification Phosphothreonine. Polar residues predominate over residues 190 to 203 (LSPTASNGSDTAQT). Positions 218 to 252 (EIEMGDWQEVWDENTGCYYYWNTQTNEVTWELPQY) constitute a WW 1 domain. An N6-acetyllysine modification is found at Lys-294. Lys-305 is covalently cross-linked (Glycyl lysine isopeptide (Lys-Gly) (interchain with G-Cter in SUMO1)). Lys-339 is covalently cross-linked (Glycyl lysine isopeptide (Lys-Gly) (interchain with G-Cter in SUMO2)). Lys-352 participates in a covalent cross-link: Glycyl lysine isopeptide (Lys-Gly) (interchain with G-Cter in SUMO1); alternate. A Glycyl lysine isopeptide (Lys-Gly) (interchain with G-Cter in SUMO2); alternate cross-link involves residue Lys-352. The segment at 355 to 518 (DPVSETKETS…KETEVEESSE (164 aa)) is disordered. Positions 400–414 (ESEEEEEEEEQDTLE) are enriched in acidic residues. Residues 418–430 (ALERKKAELRALE) show a composition bias toward basic and acidic residues. 5 positions are modified to phosphoserine: Ser-435, Ser-440, Ser-443, Ser-446, and Ser-450. Polar residues predominate over residues 436-450 (VSGSSPRSDISQPAS). Basic residues predominate over residues 457–466 (IMSKRGKWKM). Residues 469–482 (RATSPESTSRSSSK) show a composition bias toward low complexity. A phosphoserine mark is found at Ser-472, Ser-507, and Ser-516. Basic and acidic residues predominate over residues 499 to 518 (DSEKIDEISDKETEVEESSE). A Glycyl lysine isopeptide (Lys-Gly) (interchain with G-Cter in SUMO1); alternate cross-link involves residue Lys-527. A Glycyl lysine isopeptide (Lys-Gly) (interchain with G-Cter in SUMO2); alternate cross-link involves residue Lys-527. The WW 2 domain occupies 603 to 637 (NATPKGWSCHWDRDHRRYFYVNEQSGESQWEFPDG). Disordered regions lie at residues 629–681 (ESQW…SLCK), 712–813 (PLPL…VQRS), and 900–994 (PAQA…RIEE). Over residues 643–663 (SQTKEVRDESLPKLTVKDKTC) the composition is skewed to basic and acidic residues. Polar residues predominate over residues 664–677 (TDPNSTESSENPTG). Residues 712 to 741 (PLPLEMPPPPPPPPESPPPPPPPPPPPPPL) show a composition bias toward pro residues. Acidic residues predominate over residues 742–757 (EDGEIQEVEMEDEGSE). Positions 771-794 (KPSTQTTAVTSQSLVDSTASSPPS) are enriched in polar residues. Residues 913 to 939 (VEPPPPPPPPPTPTPPPPPPAPKVPPP) show a composition bias toward pro residues. The segment covering 943–955 (RKGKKDKAKKSKT) has biased composition (basic residues). A compositionally biased stretch (acidic residues) spans 971-984 (LDEEDNSSSSEEDR). Residues Ser-977, Ser-978, and Ser-979 each carry the phosphoserine modification. A compositionally biased stretch (basic and acidic residues) spans 985 to 994 (ESTAQKRIEE).

In terms of assembly, binds FMN1. Interacts with the Arg/Gly-rich-flanked Pro-rich regions of KHDRBS1/SAM68. Arginine methylation in these regions has no effect on this binding. In terms of tissue distribution, ubiquitous. Highest levels in spleen and thymus.

This is Formin-binding protein 4 (Fnbp4) from Mus musculus (Mouse).